Reading from the N-terminus, the 309-residue chain is Carbamate kinase 3 (309 aa).

Belongs to the carbamate kinase family.

Its subcellular location is the cytoplasm. It catalyses the reaction hydrogencarbonate + NH4(+) + ATP = carbamoyl phosphate + ADP + H2O + H(+). Its pathway is metabolic intermediate metabolism; carbamoyl phosphate degradation; CO(2) and NH(3) from carbamoyl phosphate: step 1/1. The polypeptide is Carbamate kinase 3 (arcC3) (Staphylococcus aureus (strain USA300)).